Here is a 1438-residue protein sequence, read N- to C-terminus: Membrane-anchored lipid-binding protein YSP2 (1438 aa).

Basic and acidic residues predominate over residues 1–17 (MRDEATRKKRSFSDGHF). 7 disordered regions span residues 1 to 97 (MRDE…SHTP), 174 to 194 (KVKHTDTKNTFNSSSSENERP), 200 to 219 (QKDDSQSSSHPAIDSMSAPN), 285 to 308 (QQQHPLSQQQGPLPVSENANQNPN), 338 to 418 (TSGP…KVKF), 455 to 485 (DENNTNNNPNASSTNLSHISKSNVNNNLGPK), and 505 to 543 (SQSNLSSHRARSKTLPANKALENAVGDEGNSKRNSRYSS). Topologically, residues 1–1277 (MRDEATRKKR…SAFSMLQQVN (1277 aa)) are cytoplasmic. Ser13 carries the phosphoserine modification. A compositionally biased stretch (basic residues) spans 18-29 (FKKLKLMSRKKQ). Residues 30-44 (PVMERSKTTRTRKES) show a composition bias toward basic and acidic residues. Residues 45–58 (TNSAAKSSLSLRRA) are compositionally biased toward low complexity. Over residues 74-97 (IGSTNEGVAGNSGSNSPAQYSHTP) the composition is skewed to polar residues. Composition is skewed to low complexity over residues 286 to 298 (QQHPLSQQQGPLP) and 374 to 398 (PTNTSTTPLSGSLTPNNRNVNANSN). A Phosphoserine modification is found at Ser411. Residues 455-470 (DENNTNNNPNASSTNL) show a composition bias toward low complexity. A compositionally biased stretch (polar residues) spans 471 to 485 (SHISKSNVNNNLGPK). Ser596 bears the Phosphoserine mark. One can recognise a GRAM domain in the interval 648–716 (EFHTLFKDCD…KEIVQIEKKT (69 aa)). A disordered region spans residues 777–843 (SSSAFFDDSD…LGPNKHSPTT (67 aa)). A compositionally biased stretch (acidic residues) spans 783–800 (DDSDDNDDDGDLDDDDPD). Polar residues predominate over residues 818–832 (NESNDLGKNQKSTNY). Residues 851–1018 (NDHLVIEANI…EIKKILSDED (168 aa)) form the VASt 1 domain. Phosphoserine is present on Ser1032. The 167-residue stretch at 1059–1225 (DDTVIDEKIN…DLKKIISNAS (167 aa)) folds into the VASt 2 domain. The interval 1225-1257 (SSTKKKSRRRGKTVNKRKSSPSTIKNEKNEENF) is disordered. Residues 1227–1243 (TKKKSRRRGKTVNKRKS) are compositionally biased toward basic residues. A helical membrane pass occupies residues 1278–1298 (ITSVQGIMTIISFFICLIFFF). The Lumenal segment spans residues 1299–1438 (RLLFHSKNTS…DNTSATNQLL (140 aa)). 3 N-linked (GlcNAc...) asparagine glycosylation sites follow: Asn1306, Asn1373, and Asn1430.

This sequence belongs to the YSP2 family.

Its subcellular location is the mitochondrion membrane. The protein localises to the endoplasmic reticulum membrane. Involved in induction of programmed cell death in response to reactive oxygen species (ROS). May be involved in sterol transfer between intracellular membranes. The polypeptide is Membrane-anchored lipid-binding protein YSP2 (Saccharomyces cerevisiae (strain ATCC 204508 / S288c) (Baker's yeast)).